Here is a 224-residue protein sequence, read N- to C-terminus: Transmembrane protein C16orf54 (224 aa).

A glycan (O-linked (GalNAc...) threonine) is linked at T4. Residues 32-52 (IPIMLVLATLAALFILTTAVL) form a helical membrane-spanning segment. Disordered regions lie at residues 104 to 138 (TDRA…SNLG) and 152 to 203 (WGPQ…GLQP). Residues T112 and T116 each carry the phosphothreonine modification. A Phosphoserine modification is found at S194.

Post-translationally, O-glycosylated with core 1 or possibly core 8 glycans.

Its subcellular location is the membrane. The chain is Transmembrane protein C16orf54 (C16orf54) from Homo sapiens (Human).